The sequence spans 402 residues: Propionate kinase (402 aa).

2 residues coordinate ATP: asparagine 11 and lysine 18. Mg(2+) is bound at residue asparagine 11. Arginine 86 lines the substrate pocket. Aspartate 143 (proton donor/acceptor) is an active-site residue. Residues histidine 175, 203-207 (HLGNG), 278-280 (DLR), and 326-330 (GIGEN) each bind ATP.

Belongs to the acetokinase family. TdcD subfamily. Homodimer. Mg(2+) serves as cofactor.

The catalysed reaction is propanoate + ATP = propanoyl phosphate + ADP. The protein operates within amino-acid degradation; L-threonine degradation via propanoate pathway; propanoate from L-threonine: step 4/4. Functionally, catalyzes the conversion of propionyl phosphate and ADP to propionate and ATP. The polypeptide is Propionate kinase (Escherichia coli O157:H7).